Reading from the N-terminus, the 242-residue chain is Glutamine transport ATP-binding protein GlnQ (242 aa).

The ABC transporter domain maps to I2–L236. Position 34-41 (G34–S41) interacts with ATP.

The protein belongs to the ABC transporter superfamily. In terms of assembly, the complex is composed of two ATP-binding proteins (GlnQ), two transmembrane proteins (GlnM and GlnP) and a solute-binding protein (GlnH).

It localises to the cell membrane. Part of the ABC transporter complex GlnHMPQ involved in glutamine transport. Probably responsible for energy coupling to the transport system. This chain is Glutamine transport ATP-binding protein GlnQ (glnQ), found in Bacillus subtilis (strain 168).